The sequence spans 247 residues: Transcription factor otaR1 (247 aa).

2 disordered regions span residues methionine 1–methionine 48 and aspartate 100–asparagine 143. The segment covering aspartate 23–serine 47 has biased composition (low complexity). Positions alanine 134–asparagine 143 are enriched in polar residues. Residues lysine 156–lysine 196 are basic motif. A bZIP domain is found at lysine 156–histidine 219. The leucine-zipper stretch occupies residues leucine 198 to leucine 212.

The protein resides in the nucleus. Transcription factor; part of the gene cluster that mediates the biosynthesis of ochratoxin A (OTA), a mycotoxin demonstrated to have nephrotoxic, immunotoxic, genotoxic, neurotoxic, and teratogenic properties. Positively regulates the expression of the cluster genes otaA, otaB, otaC and otaD, and the subsequent production of OTA. The sequence is that of Transcription factor otaR1 from Aspergillus carbonarius (strain ITEM 5010).